The following is an 881-amino-acid chain: Alanine--tRNA ligase (881 aa).

Zn(2+) contacts are provided by histidine 568, histidine 572, cysteine 670, and histidine 674.

It belongs to the class-II aminoacyl-tRNA synthetase family. Zn(2+) is required as a cofactor.

It localises to the cytoplasm. It carries out the reaction tRNA(Ala) + L-alanine + ATP = L-alanyl-tRNA(Ala) + AMP + diphosphate. Functionally, catalyzes the attachment of alanine to tRNA(Ala) in a two-step reaction: alanine is first activated by ATP to form Ala-AMP and then transferred to the acceptor end of tRNA(Ala). Also edits incorrectly charged Ser-tRNA(Ala) and Gly-tRNA(Ala) via its editing domain. This Moorella thermoacetica (strain ATCC 39073 / JCM 9320) protein is Alanine--tRNA ligase.